The following is a 532-amino-acid chain: Autophagy-related protein 21 (532 aa).

WD repeat units follow at residues 265-310 (AHDS…KPFN) and 321-360 (HNIA…HESF). Residues 317–321 (LRRGH) carry the L/FRRG motif motif. Residues 360-380 (FEYEEDPANESDPDDEDRSSE) are disordered. Acidic residues predominate over residues 361–378 (EYEEDPANESDPDDEDRS).

Belongs to the WD repeat PROPPIN family.

It is found in the cytoplasm. The protein resides in the membrane. Its subcellular location is the vacuole membrane. Required for cytoplasm to vacuole transport (Cvt) vesicles formation and mitophagy. Involved in binding of phosphatidylethanolamine to ATG8 and in recruitment of ATG8 and ATG5 to the pre-autophagosomal structure. Protects ATG8 from ARG4-mediated cleavage. The chain is Autophagy-related protein 21 (ATG21) from Debaryomyces hansenii (strain ATCC 36239 / CBS 767 / BCRC 21394 / JCM 1990 / NBRC 0083 / IGC 2968) (Yeast).